Here is a 381-residue protein sequence, read N- to C-terminus: Dual-specificity RNA methyltransferase RlmN (381 aa).

The Proton acceptor role is filled by Glu-95. The 247-residue stretch at 101–347 (EDDRGTLCVS…TTVRKTRGDD (247 aa)) folds into the Radical SAM core domain. An intrachain disulfide couples Cys-108 to Cys-352. Residues Cys-115, Cys-119, and Cys-122 each contribute to the [4Fe-4S] cluster site. Residues 178 to 179 (GE), Ser-210, 232 to 234 (SLH), and Asn-309 each bind S-adenosyl-L-methionine. The active-site S-methylcysteine intermediate is Cys-352.

Belongs to the radical SAM superfamily. RlmN family. It depends on [4Fe-4S] cluster as a cofactor.

The protein resides in the cytoplasm. The catalysed reaction is adenosine(2503) in 23S rRNA + 2 reduced [2Fe-2S]-[ferredoxin] + 2 S-adenosyl-L-methionine = 2-methyladenosine(2503) in 23S rRNA + 5'-deoxyadenosine + L-methionine + 2 oxidized [2Fe-2S]-[ferredoxin] + S-adenosyl-L-homocysteine. It carries out the reaction adenosine(37) in tRNA + 2 reduced [2Fe-2S]-[ferredoxin] + 2 S-adenosyl-L-methionine = 2-methyladenosine(37) in tRNA + 5'-deoxyadenosine + L-methionine + 2 oxidized [2Fe-2S]-[ferredoxin] + S-adenosyl-L-homocysteine. Its function is as follows. Specifically methylates position 2 of adenine 2503 in 23S rRNA and position 2 of adenine 37 in tRNAs. m2A2503 modification seems to play a crucial role in the proofreading step occurring at the peptidyl transferase center and thus would serve to optimize ribosomal fidelity. The protein is Dual-specificity RNA methyltransferase RlmN of Bordetella petrii (strain ATCC BAA-461 / DSM 12804 / CCUG 43448).